The sequence spans 314 residues: Pectin lyase (314 aa).

Arginine 202 is a catalytic residue.

It belongs to the polysaccharide lyase 1 family.

The catalysed reaction is Eliminative cleavage of (1-&gt;4)-alpha-D-galacturonan methyl ester to give oligosaccharides with 4-deoxy-6-O-methyl-alpha-D-galact-4-enuronosyl groups at their non-reducing ends.. In Pectobacterium carotovorum (Erwinia carotovora), this protein is Pectin lyase (pnl).